Here is a 760-residue protein sequence, read N- to C-terminus: Serine/threonine-protein kinase dkf-1 (760 aa).

2 consecutive Phorbol-ester/DAG-type zinc fingers follow at residues 103-153 and 194-244; these read PHVV…GIIV and PHTL…PSNC. Residues 316-444 enclose the PH domain; sequence KNLEGWMIHF…QFIKESLQPP (129 aa). The Protein kinase domain maps to 464–725; that stretch reads VLSDKTLGSG…IEKCLEHGWL (262 aa). Residues 470–478 and Lys493 each bind ATP; that span reads LGSGQFGTV. Asp589 (proton acceptor) is an active-site residue. Thr626 is modified (phosphothreonine).

It belongs to the protein kinase superfamily. CAMK Ser/Thr protein kinase family. PKD subfamily. Mg(2+) serves as cofactor. Prolonged phosphorylation at Thr-626 results in ubiquitination and degradation.

The protein localises to the cytoplasm. The protein resides in the membrane. It carries out the reaction L-seryl-[protein] + ATP = O-phospho-L-seryl-[protein] + ADP + H(+). The enzyme catalyses L-threonyl-[protein] + ATP = O-phospho-L-threonyl-[protein] + ADP + H(+). With respect to regulation, activated by DAG and phorbol esters. Phorbol-ester/DAG-type domain 1 binds phorbol ester with high affinity and mediates accumulation at the cell periphery. Phorbol-ester/DAG-type domain 2 binds phorbol ester with low affinity but may mediate initial contact, resulting in a conformational change allowing previously occluded domain 1 to anchor the kinase. Phosphorylation on Thr-626 is then also required for activation and may also result in a further conformational change. Converts transient diacylglycerol (DAG) signals into prolonged physiological effects, independently of PKC. Role in the regulation of growth and neuromuscular control of movement. Involved in immune response to S.aureus bacterium by activating transcription factor hlh-30 downstream of phospholipase plc-1. The polypeptide is Serine/threonine-protein kinase dkf-1 (Caenorhabditis briggsae).